Consider the following 394-residue polypeptide: Putative 8-amino-7-oxononanoate synthase (394 aa).

Arginine 30 lines the substrate pocket. A pyridoxal 5'-phosphate-binding site is contributed by 117–118; sequence GY. Position 142 (histidine 142) interacts with substrate. Residues serine 190, 215–218, and 246–249 each bind pyridoxal 5'-phosphate; these read DEAH and TLSK. Lysine 249 carries the N6-(pyridoxal phosphate)lysine modification. Threonine 364 contacts substrate.

This sequence belongs to the class-II pyridoxal-phosphate-dependent aminotransferase family. BioF subfamily. In terms of assembly, homodimer. Pyridoxal 5'-phosphate serves as cofactor.

The catalysed reaction is 6-carboxyhexanoyl-[ACP] + L-alanine + H(+) = (8S)-8-amino-7-oxononanoate + holo-[ACP] + CO2. It functions in the pathway cofactor biosynthesis; biotin biosynthesis. Catalyzes the decarboxylative condensation of pimeloyl-[acyl-carrier protein] and L-alanine to produce 8-amino-7-oxononanoate (AON), [acyl-carrier protein], and carbon dioxide. The sequence is that of Putative 8-amino-7-oxononanoate synthase (bioF) from Nostoc punctiforme (strain ATCC 29133 / PCC 73102).